Reading from the N-terminus, the 780-residue chain is Cation channel sperm-associated protein 1 (780 aa).

3 disordered regions span residues 1–37 (MDQN…PGHS), 71–306 (LSSH…QDHH), and 376–412 (QMSK…LQRT). At 1 to 447 (MDQNSVPEKA…EMIRNLTQSL (447 aa)) the chain is on the cytoplasmic side. Basic and acidic residues predominate over residues 110 to 122 (SYGEDYHDELQRD). Residues 211–241 (QVPHRGWPHHHQVHHHGRSRHHEAHQHGKSP) show a composition bias toward basic residues. The segment covering 261-284 (SDYHSEYHQGDHHPSEYHHGDHPH) has biased composition (basic and acidic residues). The segment covering 285–299 (HTQHHYHQTHRHRDY) has biased composition (basic residues). The span at 387 to 401 (STKHSEDWGKEEGQF) shows a compositional bias: basic and acidic residues. The span at 402–412 (QKRKTGRLQRT) shows a compositional bias: basic residues. Residues 448 to 469 (AFETFIFFVVCLNTVMLVAQTF) traverse the membrane as a helical segment. Residues 470–478 (AEVEIRGEW) are Extracellular-facing. Residues 479–500 (YFMALDSIFFCIYVVEALLKII) form a helical membrane-spanning segment. Over 501–508 (ALGLSYFF) the chain is Cytoplasmic. Residues 509 to 531 (DFWNNLDFFIMAMAVLDFLLMQT) traverse the membrane as a helical segment. Topologically, residues 532–540 (HSFAIYHQS) are extracellular. A helical transmembrane segment spans residues 541-563 (LFRILKVFKSLRALRAIRVLRRL). Topologically, residues 564-581 (SFLTSVQEVTGTLGQSLP) are cytoplasmic. The helical transmembrane segment at 582-604 (SIAAILILMFTCLFLFSAVLRAL) threads the bilayer. The Extracellular segment spans residues 605–615 (FRKSDPKRFQN). The segment at residues 616 to 628 (IFTTIFTLFTLLT) is an intramembrane region (helical; Pore-forming). Residues 629-645 (LDDWSLIYMDSRAQGAW) lie on the Extracellular side of the membrane. A helical membrane pass occupies residues 646–671 (YIIPILVIYIIIQYFIFLNLVITVLV). At 672–780 (DSFQTALFKG…FEAGEEDFRN (109 aa)) the chain is on the cytoplasmic side.

Belongs to the cation channel sperm-associated (TC 1.A.1.19) family. In terms of assembly, component of the CatSper complex or CatSpermasome composed of the core pore-forming members CATSPER1, CATSPER2, CATSPER3 and CATSPER4 as well as auxiliary members CATSPERB, CATSPERG, CATSPERD, CATSPERE, CATSPERZ, C2CD6/CATSPERT, TMEM249, TMEM262 and EFCAB9. HSPA1 may be an additional auxiliary complex member. The core complex members CATSPER1, CATSPER2, CATSPER3 and CATSPER4 form a heterotetrameric channel. The auxiliary CATSPERB, CATSPERG, CATSPERD and CATSPERE subunits form a pavilion-like structure over the pore which stabilizes the complex through interactions with CATSPER4, CATSPER3, CATSPER1 and CATSPER2 respectively. TMEM262/CATSPERH interacts with CATSPERB, further stabilizing the complex. C2CD6/CATSPERT interacts at least with CATSPERD and is required for targeting the CatSper complex in the flagellar membrane. Interacts with Ca(v)3.3/CACNA1I, leading to suppression of T-type calcium channel activity. In terms of tissue distribution, testis-specific.

Its subcellular location is the cell projection. It localises to the cilium. The protein resides in the flagellum membrane. The catalysed reaction is Ca(2+)(in) = Ca(2+)(out). With respect to regulation, the CatSper calcium channel is indirectly activated by extracellular progesterone and prostaglandins following the sequence: progesterone &gt; PGF1-alpha = PGE1 &gt; PGA1 &gt; PGE2 &gt;&gt; PGD2. The CatSper calcium channel is directly inhibited by endocannabinoid 2-arachidonoylglycerol (2AG). Indirect activation by progesterone takes place via the following mechanism: progesterone binds and activates the acylglycerol lipase ABHD2, which in turn mediates hydrolysis of 2AG inhibitor, relieving inhibition of the CatSper channel. The primary effect of progesterone activation is to shift voltage dependence towards more physiological, negative membrane potentials; it is not mediated by metabotropic receptors and second messengers. Sperm capacitation enhances the effect of progesterone by providing additional negative shift. Also activated by the elevation of intracellular pH. Its function is as follows. Pore-forming subunit of the CatSper complex, a sperm-specific voltage-gated calcium channel that plays a central role in calcium-dependent physiological responses essential for successful fertilization, such as sperm hyperactivation, acrosome reaction and chemotaxis towards the oocyte. This Homo sapiens (Human) protein is Cation channel sperm-associated protein 1 (CATSPER1).